We begin with the raw amino-acid sequence, 485 residues long: Tektin-5 (485 aa).

4 coiled-coil regions span residues 114–185 (RLTD…EVNC), 225–247 (QEQMRKLAQRIDIQMRDNRDAQH), 307–385 (QNMR…MAKE), and 421–444 (TIDDTLQTLKLRLRETQDTLQLLV).

The protein belongs to the tektin family. In terms of assembly, microtubule inner protein component of sperm flagellar doublet microtubules. Interacts with TEKT3. Post-translationally, ubiquitinated, leading to its degradation. Deubiquitinated by USP16, promoting its stability.

It is found in the cytoplasm. The protein resides in the cytoskeleton. Its subcellular location is the flagellum axoneme. Sperm-specific microtubule inner protein (MIP) part of the dynein-decorated doublet microtubules (DMTs) in flagellar axoneme. Forms an extensive interaction network in different conformations that reinforces the helix bundle composed by other tektin proteins (TEKT1 to TEKT4) and MIPs to anchor the tektin bundle onto the tubulin wall of A-tubule of the sperm flagellum. This chain is Tektin-5 (TEKT5), found in Homo sapiens (Human).